The chain runs to 502 residues: MLHVNFTEEESLNTQALIVFIDDKLKLDSELINLDQQHHGLISKTIANKLQFTGKYGQIKIIPSVVKSGEVKYLVLAGLGSEEKLTEVKIEELGGKILQNVTNAKIATIGLKIKNRISNFTSSHVASLIASGALLASYRFDKYRTTLKEADKFVVESFEISTDNNAEATKLFEVKKLIAEGVFFTRDISNEPSNIKTPQIYAERIADILEELNVDVSILGEREMKNLGMGALLGVGQGSQNESKLVVMEYQGTNKDAPYIALVGKGVIFDTGGISLKPSNNMHLMRYDMCGSAAVVGTMIAVASQELPVNIVGVVGLVENMPSGNAQRPGDVVTTMSGQTAEVLNTDAEGRLVLADAVWYAQEKFKPKCVIDVATLTGAIVVSLGPTYAGCFSNNDELADKLIKAGEEVNEKLWRMPLHEDYDAMINSDIADMANIGNVPGAAGSSTAAHFIKRFIQEGVEWAHLDIAGVANSNKPSSLGPKGAVGYGVRLLEKFIKENYEQ.

Mn(2+)-binding residues include K265 and D270. K277 is an active-site residue. D288, D347, and E349 together coordinate Mn(2+). Residue R351 is part of the active site.

This sequence belongs to the peptidase M17 family. Mn(2+) serves as cofactor.

The protein localises to the cytoplasm. It carries out the reaction Release of an N-terminal amino acid, Xaa-|-Yaa-, in which Xaa is preferably Leu, but may be other amino acids including Pro although not Arg or Lys, and Yaa may be Pro. Amino acid amides and methyl esters are also readily hydrolyzed, but rates on arylamides are exceedingly low.. It catalyses the reaction Release of an N-terminal amino acid, preferentially leucine, but not glutamic or aspartic acids.. Functionally, presumably involved in the processing and regular turnover of intracellular proteins. Catalyzes the removal of unsubstituted N-terminal amino acids from various peptides. The polypeptide is Probable cytosol aminopeptidase (Rickettsia bellii (strain OSU 85-389)).